The sequence spans 274 residues: NADPH-dependent 7-cyano-7-deazaguanine reductase (274 aa).

80-82 contributes to the substrate binding site; sequence VES. 82–83 contributes to the NADPH binding site; sequence SK. Cys181 (thioimide intermediate) is an active-site residue. Catalysis depends on Asp188, which acts as the Proton donor. Residue 220 to 221 participates in substrate binding; the sequence is HE. An NADPH-binding site is contributed by 249–250; it reads RG.

It belongs to the GTP cyclohydrolase I family. QueF type 2 subfamily. Homodimer.

It localises to the cytoplasm. It catalyses the reaction 7-aminomethyl-7-carbaguanine + 2 NADP(+) = 7-cyano-7-deazaguanine + 2 NADPH + 3 H(+). The protein operates within tRNA modification; tRNA-queuosine biosynthesis. In terms of biological role, catalyzes the NADPH-dependent reduction of 7-cyano-7-deazaguanine (preQ0) to 7-aminomethyl-7-deazaguanine (preQ1). The sequence is that of NADPH-dependent 7-cyano-7-deazaguanine reductase from Burkholderia mallei (strain NCTC 10247).